A 1170-amino-acid chain; its full sequence is Thrombospondin-1 (1170 aa).

The signal sequence occupies residues M1–S18. The segment at R47–R95 is heparin-binding. Residues S56–C270 form the Laminin G-like domain. Cysteines 171 and 232 form a disulfide. N248 and N360 each carry an N-linked (GlcNAc...) asparagine glycan. Residues P316–W373 form the VWFC domain. 3 consecutive TSP type-1 domains span residues D379 to D429, D435 to P490, and N492 to P547. W385 is a glycosylation site (C-linked (Man) tryptophan). Cystine bridges form between C391-C423, C395-C428, and C406-C413. Residues W438 and W441 are each glycosylated (C-linked (Man) tryptophan). 3 disulfides stabilise this stretch: C447/C484, C451/C489, and C462/C474. T450 carries O-linked (Fuc...) threonine glycosylation. C-linked (Man) tryptophan glycosylation occurs at W498. Intrachain disulfides connect C504–C541, C508–C546, C519–C531, C551–C562, C556–C572, C575–C586, C592–C608, C599–C617, C620–C644, C650–C663, C657–C676, C678–C689, C705–C713, C718–C738, C754–C774, C777–C797, C813–C833, C836–C856, C874–C894, C910–C930, and C946–C1167. O-linked (Fuc...) threonine glycosylation is present at T507. An involved in retention in extracellular matrix (ECM); involved in trimer formation region spans residues C531–V1152. The EGF-like 1 domain occupies P547–K587. Residue S553 is glycosylated (O-linked (Xyl) serine). The EGF-like 2 domain maps to P646 to G690. TSP type-3 repeat units lie at residues E691 to Q726, E727 to Q762, Y763 to Q785, A786 to Q821, R822 to Q844, L845 to Q882, A883 to Q918, and K919 to E954. Residue N708 is glycosylated (N-linked (GlcNAc...) asparagine). The interval H840–F934 is disordered. Composition is skewed to basic and acidic residues over residues A883–C894 and D917–F934. The Cell attachment site motif lies at R926–D928. The region spanning R958–S1170 is the TSP C-terminal domain. N-linked (GlcNAc...) asparagine glycosylation is present at N1067.

Belongs to the thrombospondin family. In terms of assembly, homotrimer; disulfide-linked. Can bind to fibrinogen, fibronectin, laminin, type V collagen and integrins alpha-V/beta-1, alpha-V/beta-3 and alpha-IIb/beta-3. Binds heparin. Interacts (via the C-terminal domain) with CD47. Interacts (via the TSP type I repeats) with CD36; the interaction conveys an antiangiogenic effect. Interacts (via the TSP type I repeats) with HRG; the interaction blocks the antiangiogenic effect of THBS1 with CD36. Interacts with ATF6 (via lumenal domain). Interacts with FN1; this interaction is enhanced by TNFAIP6, which may act as a bridging molecule between FN1 and THBS1. Interacts with SIRPA; the interaction stimulates phosphorylation of SIRPA.

Its subcellular location is the secreted. It localises to the cell surface. The protein localises to the extracellular space. It is found in the extracellular matrix. The protein resides in the endoplasmic reticulum. Its subcellular location is the sarcoplasmic reticulum. Its function is as follows. Adhesive glycoprotein that mediates cell-to-cell and cell-to-matrix interactions. Multifunctional, involved in inflammation, angiogenesis, wound healing, reactive oxygen species (ROS) signaling, nitrous oxide (NO) signaling, apoptosis, senescence, aging, cellular self-renewal, stemness, and cardiovascular and metabolic homeostasis. Negatively modulates dendritic cell activation and cytokine release, as part of an autocrine feedback loop, contributing to the resolution of inflammation and immune homeostasis. Ligand for receptor CD47. Modulates nitrous oxide (NO) signaling via CD47, hence playing a role as a pressor agent, supporting blood pressure. Plays a role in endothelial cell senescence, acting via CD47, by increasing the abundance and activation of NADPH oxidase NOX1, and so generating excess ROS. Inhibits stem cell self-renewal, acting via CD47 signaling, probably by regulation of the stem cell transcription factors POU5F1/OCT4, SOX2, MYC/c-Myc and KLF4. Negatively modulates wound healing, acting via CD47. Ligand for receptor CD36. Involved in inducing apoptosis in podocytes in response to elevated free fatty acids, acting via CD36. Plays a role in suppressing angiogenesis, acting, depending on context, via CD36 or CD47. Promotes cellular senescence in a TP53-CDKN1A-RB1 signaling-dependent manner. Ligand for immunoglobulin-like cell surface receptor SIRPA. Involved in ROS signaling in non-phagocytic cells, stimulating NADPH oxidase-derived ROS production, acting via interaction with SIRPA. Plays a role in metabolic dysfunction in diet-induced obesity, perhaps acting by exacerbating adipose inflammatory activity; its effects may be mediated, at least in part, through enhanced adipocyte proliferation. Plays a role in ER stress response, via its interaction with the activating transcription factor 6 alpha (ATF6) which produces adaptive ER stress response factors. May be involved in age-related conditions, including metabolic dysregulation, during normal aging. The protein is Thrombospondin-1 (Thbs1) of Mus musculus (Mouse).